The primary structure comprises 352 residues: Endophilin-A1 (352 aa).

Residues 1–21 (MSVAGLKKQFHKATQKVSEKV) are membrane-binding amphipathic helix. The disordered stretch occupies residues 1 to 27 (MSVAGLKKQFHKATQKVSEKVGGAEGT). The tract at residues 1 to 125 (MSVAGLKKQF…EVGEAMRELS (125 aa)) is binds and tubulates liposomes. In terms of domain architecture, BAR spans 18-249 (SEKVGGAEGT…LEERIRQASS (232 aa)). Positions 60–87 (PNPASRAKLSMINTMSKIRGQEKGPGYP) are required for dimerization upon membrane association. Positions 181 to 248 (EELRQALEKF…RLEERIRQAS (68 aa)) form a coiled coil. Residues 245-257 (RQASSQPRREYQP) show a composition bias toward basic and acidic residues. A disordered region spans residues 245–289 (RQASSQPRREYQPKPRMSLEFPTGDSTQPNGGLSHTGTPKPSGVQ). A Phosphoserine modification is found at Ser-262. Polar residues predominate over residues 268–283 (GDSTQPNGGLSHTGTP). The SH3 domain occupies 290–349 (MDQPCCRALYDFEPENEGELGFKEGDIITLTNQIDENWYEGMLHGHSGFFPINYVEILVA). Residue Tyr-299 is modified to Phosphotyrosine.

The protein belongs to the endophilin family. In terms of assembly, monomer; in cytoplasm. Homodimer; when associated with membranes. Interacts with OPHN1. Interacts with SYNJ1. Interacts with DNM1. Interacts with MAP4K3; the interaction appears to regulate MAP4K3-mediated JNK activation. Interacts with PDCD6IP. Interacts with ATXN2. Interacts with ADAM9 and ADAM15 cytoplasmic tails. Interacts with BIN2. Interacts with TMEM108. Interacts with ADGRB2. Brain, mostly in frontal cortex. Expressed at high level in fetal cerebellum.

The protein resides in the cytoplasm. It localises to the membrane. The protein localises to the early endosome. It is found in the presynapse. Its function is as follows. Implicated in synaptic vesicle endocytosis. May recruit other proteins to membranes with high curvature. Required for BDNF-dependent dendrite outgrowth. Cooperates with SH3GL2 to mediate BDNF-NTRK2 early endocytic trafficking and signaling from early endosomes. This is Endophilin-A1 (SH3GL2) from Homo sapiens (Human).